A 335-amino-acid chain; its full sequence is Homeobox protein unc-39 (335 aa).

2 disordered regions span residues 27-56 (FTSSSNSNTSNSSTSPSHISDQFSSSGGPP) and 269-294 (RRQRDKSNNSAKCSPPSSSSSTNGGS). Low complexity predominate over residues 28 to 41 (TSSSNSNTSNSSTS). Over residues 42 to 53 (PSHISDQFSSSG) the composition is skewed to polar residues. The segment at residues 225 to 277 (KDSSRKFLKQFFRNVSEYPTQEQKREISRATGLKIVQISNWFKNRRQRDKSNN) is a DNA-binding region (homeobox). Over residues 276–294 (NNSAKCSPPSSSSSTNGGS) the composition is skewed to low complexity.

This sequence belongs to the SIX/Sine oculis homeobox family.

It is found in the nucleus. Functionally, probable transcription factor required for differentiation and migration of neuronal cells, such as RID and CAN neurons. Specifically, plays a role in the terminal differentiation of RID peptidergic neurons. Also required for CAN neuron axon guidance. The sequence is that of Homeobox protein unc-39 from Caenorhabditis elegans.